A 359-amino-acid polypeptide reads, in one-letter code: DNA ligase (359 aa).

ATP contacts are provided by residues 32-35, R39, 55-57, and E93; these read EIKY and RVS. Catalysis depends on K34, which acts as the N6-AMP-lysine intermediate. E217 is a binding site for a divalent metal cation. ATP-binding residues include K232 and K238.

The protein belongs to the ATP-dependent DNA ligase family. A divalent metal cation is required as a cofactor.

It carries out the reaction ATP + (deoxyribonucleotide)n-3'-hydroxyl + 5'-phospho-(deoxyribonucleotide)m = (deoxyribonucleotide)n+m + AMP + diphosphate.. In terms of biological role, DNA ligase that seals nicks in double-stranded DNA during DNA replication, DNA recombination and DNA repair in an ATP-dependent reaction. Binds specifically to DNA nicks containing a 3'-OH and a 5'-phosphate group. This is DNA ligase from Escherichia phage T7 (Bacteriophage T7).